The primary structure comprises 409 residues: Glutamyl-tRNA(Gln) amidotransferase subunit D (409 aa).

Residues 68–390 (RKISVLATGG…DLFRDLFRKN (323 aa)) enclose the Asparaginase/glutaminase domain. Catalysis depends on residues Thr78, Thr152, Asp153, and Lys230.

This sequence belongs to the asparaginase 1 family. GatD subfamily. As to quaternary structure, heterodimer of GatD and GatE.

It catalyses the reaction L-glutamyl-tRNA(Gln) + L-glutamine + ATP + H2O = L-glutaminyl-tRNA(Gln) + L-glutamate + ADP + phosphate + H(+). Its function is as follows. Allows the formation of correctly charged Gln-tRNA(Gln) through the transamidation of misacylated Glu-tRNA(Gln) in organisms which lack glutaminyl-tRNA synthetase. The reaction takes place in the presence of glutamine and ATP through an activated gamma-phospho-Glu-tRNA(Gln). The GatDE system is specific for glutamate and does not act on aspartate. This Thermoplasma acidophilum (strain ATCC 25905 / DSM 1728 / JCM 9062 / NBRC 15155 / AMRC-C165) protein is Glutamyl-tRNA(Gln) amidotransferase subunit D.